A 910-amino-acid chain; its full sequence is Anoctamin-6 (910 aa).

The Cytoplasmic portion of the chain corresponds to Met-1–Ala-300. Residues Trp-301–Leu-321 form a helical membrane-spanning segment. Residues Tyr-322–Ser-375 lie on the Extracellular side of the membrane. Asn-329 carries an N-linked (GlcNAc...) asparagine glycan. Intrachain disulfides connect Cys-330–Cys-371, Cys-337–Cys-364, Cys-348–Cys-806, Cys-351–Cys-355, and Cys-595–Cys-600. A glycan (N-linked (GlcNAc...) asparagine) is linked at Asn-361. Residues Phe-376–Trp-396 traverse the membrane as a helical segment. The Cytoplasmic portion of the chain corresponds to Lys-397–Cys-455. Residues Ala-456 to Tyr-476 form a helical membrane-spanning segment. The Extracellular segment spans residues Arg-477–Ser-509. N-linked (GlcNAc...) asparagine glycosylation occurs at Asn-493. Residues Ile-510–Val-530 form a helical membrane-spanning segment. Residues Ala-531–Thr-551 lie on the Cytoplasmic side of the membrane. Residues Met-552–Phe-572 traverse the membrane as a helical segment. Residues Lys-573 to Leu-601 are Extracellular-facing. Residues Leu-602 to Ile-621 form a helical membrane-spanning segment. Residues Gln-622–Leu-663 are Cytoplasmic-facing. 3 residues coordinate Ca(2+): Glu-623, Glu-666, and Glu-669. 2 consecutive transmembrane segments (helical) span residues Phe-664–Phe-684 and Pro-685–Lys-705. At Leu-706 to Gly-722 the chain is on the cytoplasmic side. The helical transmembrane segment at Ala-723 to Ile-743 threads the bilayer. Residues Ala-744 to Ala-836 lie on the Extracellular side of the membrane. N-linked (GlcNAc...) asparagine glycans are attached at residues Asn-777, Asn-790, and Asn-802. A helical transmembrane segment spans residues Phe-837–Pro-857. Residues Asp-858–Glu-910 are Cytoplasmic-facing.

This sequence belongs to the anoctamin family. As to quaternary structure, homodimer. Expressed in embryonic stem cell, fetal liver, retina, chronic myologenous leukemia and intestinal cancer.

The protein resides in the cell membrane. It catalyses the reaction a 1,2-diacyl-sn-glycero-3-phospho-L-serine(in) = a 1,2-diacyl-sn-glycero-3-phospho-L-serine(out). The catalysed reaction is a beta-D-galactosyl-(1&lt;-&gt;1')-N-acylsphing-4-enine(out) = a beta-D-galactosyl-(1&lt;-&gt;1')-N-acylsphing-4-enine(in). The enzyme catalyses a 1,2-diacyl-sn-glycero-3-phosphocholine(in) = a 1,2-diacyl-sn-glycero-3-phosphocholine(out). With respect to regulation, exhibits synergistic gating by Ca(2+) and voltage. Inhibited by some non-specific cation channel blockers such as: ruthenium red, 2-aminoethyl diphenylborinate (2APB), gadolinium and cadmium ions. (Microbial infection) Activated by SARS coronavirus-2/SARS-CoV-2 spike protein. Its function is as follows. Small-conductance calcium-activated nonselective cation (SCAN) channel which acts as a regulator of phospholipid scrambling in platelets and osteoblasts. Phospholipid scrambling results in surface exposure of phosphatidylserine which in platelets is essential to trigger the clotting system whereas in osteoblasts is essential for the deposition of hydroxyapatite during bone mineralization. Has calcium-dependent phospholipid scramblase activity; scrambles phosphatidylserine, phosphatidylcholine and galactosylceramide. Can generate outwardly rectifying chloride channel currents in airway epithelial cells and Jurkat T lymphocytes. (Microbial infection) Upon SARS coronavirus-2/SARS-CoV-2 infection, is activated by spike protein which increases the amplitude of spontaneous Ca(2+) signals and is required for spike-mediated syncytia. In Homo sapiens (Human), this protein is Anoctamin-6.